The primary structure comprises 181 residues: Peptide deformylase (181 aa).

2 residues coordinate Fe cation: cysteine 103 and histidine 145. Glutamate 146 is a catalytic residue. Histidine 149 is a Fe cation binding site.

The protein belongs to the polypeptide deformylase family. Fe(2+) serves as cofactor.

The catalysed reaction is N-terminal N-formyl-L-methionyl-[peptide] + H2O = N-terminal L-methionyl-[peptide] + formate. Functionally, removes the formyl group from the N-terminal Met of newly synthesized proteins. Requires at least a dipeptide for an efficient rate of reaction. N-terminal L-methionine is a prerequisite for activity but the enzyme has broad specificity at other positions. In Orientia tsutsugamushi (strain Ikeda) (Rickettsia tsutsugamushi), this protein is Peptide deformylase.